Consider the following 445-residue polypeptide: Ribosomal protein uS12 methylthiotransferase RimO (445 aa).

The region spanning 4–119 (IKVALVSLGC…LLESIKVFLK (116 aa)) is the MTTase N-terminal domain. Residues cysteine 13, cysteine 48, cysteine 82, cysteine 156, cysteine 160, and cysteine 163 each contribute to the [4Fe-4S] cluster site. The Radical SAM core domain occupies 142 to 372 (TTPTYTAYVR…MILQQSISKD (231 aa)). Residues 375–441 (KEKIGKTYEV…EYDLIGVVYN (67 aa)) enclose the TRAM domain.

This sequence belongs to the methylthiotransferase family. RimO subfamily. Requires [4Fe-4S] cluster as cofactor.

Its subcellular location is the cytoplasm. It catalyses the reaction L-aspartate(89)-[ribosomal protein uS12]-hydrogen + (sulfur carrier)-SH + AH2 + 2 S-adenosyl-L-methionine = 3-methylsulfanyl-L-aspartate(89)-[ribosomal protein uS12]-hydrogen + (sulfur carrier)-H + 5'-deoxyadenosine + L-methionine + A + S-adenosyl-L-homocysteine + 2 H(+). Catalyzes the methylthiolation of an aspartic acid residue of ribosomal protein uS12. The chain is Ribosomal protein uS12 methylthiotransferase RimO from Clostridium botulinum (strain ATCC 19397 / Type A).